The primary structure comprises 759 residues: 1,4-alpha-glucan branching enzyme GlgB (759 aa).

The interval 1–22 (MAKTKGLPKDTAVTPSPHLRPH) is disordered. The active-site Nucleophile is Asp-422. Glu-475 serves as the catalytic Proton donor.

This sequence belongs to the glycosyl hydrolase 13 family. GlgB subfamily. Monomer.

The enzyme catalyses Transfers a segment of a (1-&gt;4)-alpha-D-glucan chain to a primary hydroxy group in a similar glucan chain.. Its pathway is glycan biosynthesis; glycogen biosynthesis. Its function is as follows. Catalyzes the formation of the alpha-1,6-glucosidic linkages in glycogen by scission of a 1,4-alpha-linked oligosaccharide from growing alpha-1,4-glucan chains and the subsequent attachment of the oligosaccharide to the alpha-1,6 position. This chain is 1,4-alpha-glucan branching enzyme GlgB, found in Mycobacterium sp. (strain KMS).